Reading from the N-terminus, the 587-residue chain is Trihelix transcription factor GTL1 (587 aa).

Composition is skewed to gly residues over residues 1 to 10 (MEQGGGGGGN) and 41 to 54 (GGLGGGGGGGGGGS). The tract at residues 1 to 63 (MEQGGGGGGN…SASSSSGNRW (63 aa)) is disordered. The Myb-like 1 domain occupies 55–119 (ASSSSGNRWP…KCKEKFENVQ (65 aa)). Residues 96–103 (SRKLLELG) carry the Nuclear localization signal 1 motif. A compositionally biased stretch (low complexity) spans 173-194 (SSSPFPVFSQPQPQTQTQPPQT). The tract at residues 173–264 (SSSPFPVFSQ…RKRGNRGGGG (92 aa)) is disordered. A compositionally biased stretch (pro residues) spans 201-210 (PTPPPLPLPS). Positions 221-232 (SSHSSSTASGMG) are enriched in low complexity. The span at 233-242 (SDDDDDDMDV) shows a compositional bias: acidic residues. Residues 285-328 (QRSFLEALEKREQERLDREEAWKRQEMARLAREHEVMSQERAAS) adopt a coiled-coil conformation. The segment at 348–435 (QLPPSLSSQP…EQSSLPSSSR (88 aa)) is disordered. Residues 356 to 366 (QPPPPYQPPPA) are compositionally biased toward pro residues. Low complexity-rich tracts occupy residues 379–395 (AQSQSQQPIMAIPQQQI) and 411–434 (QKQQQQPQQEMVMSSEQSSLPSSS). The Myb-like 2 domain maps to 434 to 492 (SRWPKAEILALINLRSGMEPRYQDNVPKGLLWEEISTSMKRMGYNRNAKRCKEKWENIN). Positions 472–479 (MKRMGYNR) match the Nuclear localization signal 2 motif. Positions 530–587 (GGGSSTSGLPQDQKQSPVTAMKPPQEGLVNVQQTHGSASTEEEEPIEESPQGTEKKTL) are disordered. Composition is skewed to polar residues over residues 538-547 (LPQDQKQSPV) and 559-568 (NVQQTHGSAS).

Mostly expressed in siliques, and, to a lower extent, in growing root hairs, leaves, stems, and flowers. Present in abaxial epidermal cells, predominantly in guard cells, pavement cells, and meristemoids.

The protein localises to the nucleus. Functionally, transcription repressor that binds specific DNA sequence such as GT3 box 5'-GGTAAA-3' in the SDD1 promoter. Negative regulator of water use efficiency (WUE) via the promotion of stomatal density and distribution by the transcription repression of SDD1. Regulates the expression of several cell cycle genes and endoreduplication, especially in trichomes where it prevents ploidy-dependent plant cell growth. Regulates negatively root hair growth by directly binding RSL4 promoter and repressing RSL4 expression. The chain is Trihelix transcription factor GTL1 from Arabidopsis thaliana (Mouse-ear cress).